A 757-amino-acid chain; its full sequence is MQPIYQYAWIIPFVPLPVTMSIGLGLLLVPTATKNLRRMWAFPSVSLLSIVMVFSADLSVQQIDGSSIYQYLWSWTINNDFSLEFGHLIDPLTSIMSILITTVGIMVLIYSDKYMSHDQGYLRFFAYMSFSNTSMLGLVTSSNLIQIYIFWELVGMCSYLLIGFWFTRPIAANACQKALVTNRVGDFGLLLGILGLYWITGSFEFRDLFEIFNNLIHNNGVNSLFATLCASLLFAGAVAKSAQFPLHVWLPDAMEGPTPISALIHAATMVAAGIFLVARLLPLFTVIPYIMNLISLIGVITVLLGATLALAQRDIKRSLAYSTMSQLGYIMLAPGIGSYRAALFHLITHAYSKALLFLGSGSIIHSMEPIVGYSPDKSQNMVLMGGLRKYVPITKMTFLLGTLSLCGIPPLACFWSKDEILNDSWLYSPIFAIIACATAGLTAFYMFRTYLLTFEGYLYAHFQNYSGTQNSSFYSISIWGKEEPKLVNRNLLLSTINKNEKVSFFSKKTCKINGNVRNLMRSFSTHFDNKDTSMYPHESDNTMLLPLLVLVLFTLFVGFIGIPFDQGVMGLDILSKWLTPSINLLHQNSNYSVNWYEFATNAFFSVSIAYFGIFIASLLYGSVYLFFQNLELINSFVKIGPKRIFLDQIINVIYNWSYNRGYIDVFYATSLTKGIRGLAKLTHFFDRRVIDGIMNGVGVSSFFVGEGIKYLGGGRISSYLFVYLSYVSIFLLIYIFFFRKVESIKLFQTKNGIPLYL.

Helical transmembrane passes span 9 to 29 (WIIPFVPLPVTMSIGLGLLLV), 40 to 60 (WAFPSVSLLSIVMVFSADLSV), 89 to 109 (IDPLTSIMSILITTVGIMVLI), 122 to 139 (LRFFAYMSFSNTSMLGLV), 147 to 167 (IYIFWELVGMCSYLLIGFWFT), 185 to 205 (GDFGLLLGILGLYWITGSFEF), 219 to 239 (NGVNSLFATLCASLLFAGAVA), 258 to 278 (TPISALIHAATMVAAGIFLVA), 280 to 300 (LLPLFTVIPYIMNLISLIGVI), 327 to 347 (LGYIMLAPGIGSYRAALFHLI), 354 to 374 (ALLFLGSGSIIHSMEPIVGYS), 396 to 416 (MTFLLGTLSLCGIPPLACFWS), 425 to 445 (WLYSPIFAIIACATAGLTAFY), 544 to 564 (LLPLLVLVLFTLFVGFIGIPF), 607 to 627 (SIAYFGIFIASLLYGSVYLFF), 692 to 712 (GIMNGVGVSSFFVGEGIKYLG), and 718 to 738 (SYLFVYLSYVSIFLLIYIFFF).

Belongs to the complex I subunit 5 family. In terms of assembly, NDH is composed of at least 16 different subunits, 5 of which are encoded in the nucleus.

Its subcellular location is the plastid. It localises to the chloroplast thylakoid membrane. It carries out the reaction a plastoquinone + NADH + (n+1) H(+)(in) = a plastoquinol + NAD(+) + n H(+)(out). The enzyme catalyses a plastoquinone + NADPH + (n+1) H(+)(in) = a plastoquinol + NADP(+) + n H(+)(out). In terms of biological role, NDH shuttles electrons from NAD(P)H:plastoquinone, via FMN and iron-sulfur (Fe-S) centers, to quinones in the photosynthetic chain and possibly in a chloroplast respiratory chain. The immediate electron acceptor for the enzyme in this species is believed to be plastoquinone. Couples the redox reaction to proton translocation, and thus conserves the redox energy in a proton gradient. This Drimys granadensis protein is NAD(P)H-quinone oxidoreductase subunit 5, chloroplastic (ndhF).